The chain runs to 239 residues: Dihydromethanopterin reductase (acceptor) (239 aa).

4Fe-4S ferredoxin-type domains are found at residues 144–175 (MPYN…EKNG) and 176–205 (VTDQ…GGPV). [4Fe-4S] cluster is bound by residues Cys153, Cys156, Cys159, Cys165, Cys185, Cys188, Cys191, and Cys195.

As to quaternary structure, homodimer. [4Fe-4S] cluster serves as cofactor.

It carries out the reaction 5,6,7,8-tetrahydromethanopterin + A = 7,8-dihydromethanopterin + AH2. Its pathway is cofactor biosynthesis; 5,6,7,8-tetrahydromethanopterin biosynthesis. In terms of biological role, involved in the biosynthesis of tetrahydromethanopterin, a coenzyme used in methanogenesis. Catalyzes the reduction of dihydromethanopterin (H(2)MPT) to tetrahydromethanopterin (H(4)MPT). Ferredoxin may serve as an electron donor. In Methanosarcina mazei (strain ATCC BAA-159 / DSM 3647 / Goe1 / Go1 / JCM 11833 / OCM 88) (Methanosarcina frisia), this protein is Dihydromethanopterin reductase (acceptor).